The primary structure comprises 244 residues: 5-oxoprolinase subunit A (244 aa).

The protein belongs to the LamB/PxpA family. Forms a complex composed of PxpA, PxpB and PxpC.

The catalysed reaction is 5-oxo-L-proline + ATP + 2 H2O = L-glutamate + ADP + phosphate + H(+). Functionally, catalyzes the cleavage of 5-oxoproline to form L-glutamate coupled to the hydrolysis of ATP to ADP and inorganic phosphate. The sequence is that of 5-oxoprolinase subunit A from Escherichia coli (strain K12).